The primary structure comprises 639 residues: 1-deoxy-D-xylulose-5-phosphate synthase (639 aa).

Thiamine diphosphate is bound by residues histidine 79 and 120-122 (GHS). A Mg(2+)-binding site is contributed by aspartate 151. Residues 152–153 (GS), asparagine 180, tyrosine 289, and glutamate 371 each bind thiamine diphosphate. Asparagine 180 contacts Mg(2+).

This sequence belongs to the transketolase family. DXPS subfamily. Homodimer. Mg(2+) serves as cofactor. It depends on thiamine diphosphate as a cofactor.

The enzyme catalyses D-glyceraldehyde 3-phosphate + pyruvate + H(+) = 1-deoxy-D-xylulose 5-phosphate + CO2. Its pathway is metabolic intermediate biosynthesis; 1-deoxy-D-xylulose 5-phosphate biosynthesis; 1-deoxy-D-xylulose 5-phosphate from D-glyceraldehyde 3-phosphate and pyruvate: step 1/1. Functionally, catalyzes the acyloin condensation reaction between C atoms 2 and 3 of pyruvate and glyceraldehyde 3-phosphate to yield 1-deoxy-D-xylulose-5-phosphate (DXP). This Agrobacterium fabrum (strain C58 / ATCC 33970) (Agrobacterium tumefaciens (strain C58)) protein is 1-deoxy-D-xylulose-5-phosphate synthase.